Consider the following 321-residue polypeptide: Olfactory receptor 14J1 (321 aa).

Over 1-23 the chain is Extracellular; that stretch reads MVNLTSMSGFLLMGFSDERKLQI. A glycan (N-linked (GlcNAc...) asparagine) is linked at asparagine 3. The chain crosses the membrane as a helical span at residues 24–44; the sequence is LHALVFLVTYLLALTGNLLII. The Cytoplasmic segment spans residues 45-52; it reads TIITVDRR. Residues 53–73 traverse the membrane as a helical segment; sequence LHSPMYYFLKHLSLLDLCFIS. The Extracellular segment spans residues 74–97; sequence VTVPQSIANSLMGNGYISLVQCIL. Cysteine 95 and cysteine 187 form a disulfide bridge. The chain crosses the membrane as a helical span at residues 98–118; it reads QVFFFIALASSEVAILTVMSY. At 119–137 the chain is on the cytoplasmic side; it reads DRYAAICQPLHYETIMDPR. Residues 138-158 form a helical membrane-spanning segment; it reads ACRHAVIAVWIAGGLSGLMHA. Over 159–194 the chain is Extracellular; the sequence is AINFSIPLCGKRVIHQFFCDVPQMLKLACSYEFINE. The chain crosses the membrane as a helical span at residues 195-215; the sequence is IALAAFTTSAAFICLISIVLS. The Cytoplasmic portion of the chain corresponds to 216–235; that stretch reads YIRIFSTVLRIPSAEGRTKV. Residues 236 to 256 form a helical membrane-spanning segment; sequence FSTCLPHLFVATFFLSAAGFE. Residues 257–269 lie on the Extracellular side of the membrane; the sequence is FLRLPSDSSSTVD. Residues 270–290 traverse the membrane as a helical segment; the sequence is LVFSVFYTVIPPTLNPVIYSL. At 291-321 the chain is on the cytoplasmic side; it reads RNDSMKAALRKMLSKEELPQRKMCLKAMFKL.

This sequence belongs to the G-protein coupled receptor 1 family.

Its subcellular location is the cell membrane. Its function is as follows. Odorant receptor. In Homo sapiens (Human), this protein is Olfactory receptor 14J1 (OR14J1).